Here is a 342-residue protein sequence, read N- to C-terminus: S-adenosylmethionine:tRNA ribosyltransferase-isomerase (342 aa).

The protein belongs to the QueA family. As to quaternary structure, monomer.

Its subcellular location is the cytoplasm. It carries out the reaction 7-aminomethyl-7-carbaguanosine(34) in tRNA + S-adenosyl-L-methionine = epoxyqueuosine(34) in tRNA + adenine + L-methionine + 2 H(+). The protein operates within tRNA modification; tRNA-queuosine biosynthesis. Its function is as follows. Transfers and isomerizes the ribose moiety from AdoMet to the 7-aminomethyl group of 7-deazaguanine (preQ1-tRNA) to give epoxyqueuosine (oQ-tRNA). In Bacillus velezensis (strain DSM 23117 / BGSC 10A6 / LMG 26770 / FZB42) (Bacillus amyloliquefaciens subsp. plantarum), this protein is S-adenosylmethionine:tRNA ribosyltransferase-isomerase.